Here is a 328-residue protein sequence, read N- to C-terminus: Probable magnesium transporter NIPA6 (328 aa).

Topologically, residues 1–4 (METD) are extracellular. The helical transmembrane segment at 5–25 (NGKGLILAVASSVFIGSSFIL) threads the bilayer. At 26-51 (KKKGLKRAGAIGTRAGYGGYTYLLEP) the chain is on the cytoplasmic side. The chain crosses the membrane as a helical span at residues 52-72 (LWWAGMVTMIVGEAANFVAYI). Residues 73–76 (YAPA) are Extracellular-facing. The chain crosses the membrane as a helical span at residues 77 to 97 (VLVTPLGALSIIISAVLAHFL). Over 98–104 (LKEKLKK) the chain is Cytoplasmic. Residues 105-125 (MGVLGCVSCIVGSVVIVIHAP) traverse the membrane as a helical segment. At 126–142 (KEQTPNSVEEIWNLATQ) the chain is on the extracellular side. The helical transmembrane segment at 143–163 (PAFLIYVAITMSIVLALILHF) threads the bilayer. The Cytoplasmic portion of the chain corresponds to 164–175 (EPLCGQTNILVY). The helical transmembrane segment at 176-196 (IGICSLMGALTVMSIKAIGIA) threads the bilayer. Residues 197–209 (IKLTMEGVSQIGY) are Extracellular-facing. Residues 210-230 (PQTWLFVMVAVTCVVTQLIYL) traverse the membrane as a helical segment. The Cytoplasmic portion of the chain corresponds to 231 to 240 (NKALDTFNAA). Residues 241 to 261 (IVSPVYYVMFTTLTIVASAIM) form a helical membrane-spanning segment. Topologically, residues 262–269 (FKDWSGQD) are extracellular. The chain crosses the membrane as a helical span at residues 270–290 (AASVASELCGFITVLTGTMIL). Residues 291–328 (HGTREEEQQQASSEHVRWYDSRKSMNEEHLVSLYSPEY) are Cytoplasmic-facing.

Belongs to the NIPA (TC 2.A.7) family. In terms of assembly, homodimer.

The protein localises to the cell membrane. Its subcellular location is the early endosome. Functionally, acts as a Mg(2+) transporter. Can also transport other divalent cations such as Fe(2+), Sr(2+), Ba(2+), Mn(2+) and Co(2+) but to a much less extent than Mg(2+). In Arabidopsis thaliana (Mouse-ear cress), this protein is Probable magnesium transporter NIPA6.